Here is a 1155-residue protein sequence, read N- to C-terminus: MIKRVHLGQGKAEEILNLPNLIEIQLNSYEKFLQLERLKNNKPLLNEGLESVFRDVFPMKSSNGEVALEYEKYYIEYDSISFTEKECKRKGQSYEAVLKIRLNLQFLTTGEIRQKDVYMGTIPLMTDRGTFIVNGAERVIVSQIHRSPGVVFYKEKDLYYARIIPYRGSWLEFEIDSKKDYLYVKIDRKKRILVTLFLRALGLDTREKIIETFYKIRKIEVNDDTKREITGQYLATNITIKENMTYRAGDKITLQDIEDFLQNGVKEINLIDFDGYDSVPGKHFISSDVILNCFEKEDAYFALKDGFKELSRESVMLAVYSVLLPGEPISIDNAENDLRTVFFSEKRYDLGHVGRYKLSKKFGLDDLTTSVLTMTDIVNTISHLLRIYDGHDVLDDIDHLGNRRVRSVGELLTNIYKGAMSRVEKIAKDRMSNKEVFNLKPQELISVKPVVSAVKEFFATSQLSQFMDQVNPLAELTHKRRLNALGPGGLSRDRAGFEVRDVHYTHYGRMCPIETPEGPNIGLIVSLATYSKVNDYGFLETPYRKVIDGKVTDDIEYLSAIDEEKKCIAQANASVSSDGNYTDDLVSVRISGDYTTMMPKNIDYMDVSPRQLISVSSALIPFLEHNDANRALMGSNMQRQAVPLLFPQPPIVGTGMERIVAKDSGVVIKAKRPGRVVLATNKKIVIKPDNATSERDLDEYELYKYERTNQDTSFNHSVLVKNGQIVNKDEIIADGPATRYGELALGNNLLVGFIPWNGFNYEDAILISERIVKEDLYTSIHIKEFSIEVRETKLGPEKVTADIPNVSGKILSKLDENGIVRIGTYVKPGDILIGKVTPKSEGDITPEFKLLTSIFGEKAKDVKNNSLKVPHGTEGTVIDVQRITKDDVGNLPPGVDEILKVYIAKKRKLKEGDKMAGRHGNKGVVAKILPVEDMPYLADGTPLDICLNPLGVPSRMNIGQLMESQLGLAGKYLGEYYDVPVFESATNECIQEKLKKAGFNETSKAVLYDGYTGEPFENEVMVGVIYMLKLHHLVDDKMHARSTGPYSLVSQQPLGGKAQFGGQRLGEMEVWALEAYGAAHTLQELLTVKSDDMSGRVKIYENIVKGIPTNVSGIPESFNVLMQELRGLGFDLSIYDDNGNQIPLTEKEEELINKT.

Belongs to the RNA polymerase beta chain family. The RNAP catalytic core consists of 2 alpha, 1 beta, 1 beta' and 1 omega subunit. When a sigma factor is associated with the core the holoenzyme is formed, which can initiate transcription.

It carries out the reaction RNA(n) + a ribonucleoside 5'-triphosphate = RNA(n+1) + diphosphate. In terms of biological role, DNA-dependent RNA polymerase catalyzes the transcription of DNA into RNA using the four ribonucleoside triphosphates as substrates. The chain is DNA-directed RNA polymerase subunit beta from Borrelia duttonii (strain Ly).